Consider the following 371-residue polypeptide: Neuropeptide S receptor (371 aa).

At 1 to 52 (MPANLTEGSFHANQTVPMLDSSPVACTEIVTFTEALVAEEWGSFYSSFKTEQ) the chain is on the extracellular side. Residues Asn4 and Asn13 are each glycosylated (N-linked (GlcNAc...) asparagine). A helical transmembrane segment spans residues 53–73 (LITLWVLFVVTIVGNSVVLFS). The Cytoplasmic segment spans residues 74 to 82 (TCRRKRKSR). A helical membrane pass occupies residues 83–103 (MTFFVTQLAITDSFTGLINIL). Over 104–123 (TDIIWRFTGDFMAPDLVCRV) the chain is Extracellular. Residues Cys121 and Cys197 are joined by a disulfide bond. The helical transmembrane segment at 124–144 (VRYLQVVLLYASTYVLVSLSI) threads the bilayer. Over 145 to 164 (DRYHAIVYPMKFLQGEKQAK) the chain is Cytoplasmic. Residues 165-185 (VLIGIAWSLSFLFSIPTLIIF) form a helical membrane-spanning segment. The Extracellular segment spans residues 186–212 (GKRTLSNGEVQCWALWPDDSYWTPYMT). A helical transmembrane segment spans residues 213–233 (IVAFLVYFIPLAIISVIYGLV). Residues 234-275 (IRTIWMKSKTHETVISNCSDGKLCCSYNRGLISKAKIKAIKY) are Cytoplasmic-facing. Residues 276–296 (SIVIILAFICCWSPYFLFDIL) traverse the membrane as a helical segment. Topologically, residues 297-312 (DNFNVLPDTKERFYAS) are extracellular. A helical transmembrane segment spans residues 313-333 (VIIQNLPALNSAINPLIYCIF). Over 334–371 (SSSICSPCKMQRSQDSRMTYRERSERHEMQILSKPEFI) the chain is Cytoplasmic.

It belongs to the G-protein coupled receptor 1 family. Vasopressin/oxytocin receptor subfamily.

It is found in the cell membrane. In terms of biological role, G-protein coupled receptor for neuropeptide S (NPS). Promotes mobilization of intracellular Ca(2+) stores. Inhibits cell growth in response to NPS binding. Involved in pathogenesis of asthma and other IgE-mediated diseases. The polypeptide is Neuropeptide S receptor (Npsr1) (Mus musculus (Mouse)).